A 72-amino-acid chain; its full sequence is Kappa-conotoxin PVIIA (72 aa).

An N-terminal signal peptide occupies residues 1-22 (MKLTCVVIVVVLFLTACQLITA). Residues 23–45 (DDSRRTQKHRALRSTTKLSLSTR) constitute a propeptide that is removed on maturation. Intrachain disulfides connect cysteine 46-cysteine 61, cysteine 53-cysteine 65, and cysteine 60-cysteine 71. Proline 49 bears the 4-hydroxyproline mark.

Belongs to the conotoxin O1 superfamily. This toxin is not amidated at the C-terminal Val residue. As to expression, expressed by the venom duct.

The protein localises to the secreted. Its function is as follows. Kappa-conotoxins bind and inhibit voltage-gated potassium channels (Kv). This toxin inhibits the drosophila Shaker channel (IC(50)=57-80 nM). In vivo, when tested in fish, this toxin induces hyperactivity, followed by continuous contraction and extension of major fins, without immobilization or death. Injection of this peptide together with the delta-conotoxin PVIA causes the sudden tetanus of prey (STOP) syndrome, which is a single, lethal 'fin-pop' in envenomed fish. When tested in mice, induces hyperactivity. This is Kappa-conotoxin PVIIA from Conus purpurascens (Purple cone).